Reading from the N-terminus, the 681-residue chain is MQKYHFTGLDCPDCANKLESALNKQSYVQEARVVFNTNTLYLKTQDMPKALALIKQLEPDMELSEQVQSEAKPSAIPLLLSVVLYLIAVATIHFSAQNWALHLSYALLAGVYLVAGKDVFLGALRAIRNKQFFDENTLMLSATIAAFGVGAHEEAVSIMVFYSAGEFLQQLAIARSKQSLHALLDVAPNHAVRKVGQELQEVEPSALAIGDVVIVKVGEKIPTDGVVLRGESLLDQKALTGESLPVNVKEHSAVLGGSINLKGVLEIQVSKLYADSSVAKIVDLVSNAVSQKSQTEKFITTFARYYTPAVFAIALLIALVPPLLGHGDFDTWIYRGLFALMVSCPCALVISVPLGYFGGVGAASRAGILIKSVQTLEALSQVKNIAFDKTGTLSKGEFNVIDVVPIAPFSKEDVLQHATCAQILSTHPIAISIQKAYKRQCQHEVKDYQEIGGLGVQASCHSHLIIAGNDKMLHKYNIPHDTCSLEGTIVHVAVDGKHIGYIVVADTLKDNAKECLDGLKHAGIEHMCILSGDHEYSTKRVAKELDCPYYANLLPEDKLNAFKDFQAQHAHKSMFVGDGINDAPTLARADVSMSMGSASQISKESADIVITNNSLESVLKVFKIAKKTKRIIIENIIFALAIKAMFIVLGLSGDASLWEAVLGDVGVTLIALANSMRTMRI.

The 66-residue stretch at 1–66 folds into the HMA domain; that stretch reads MQKYHFTGLD…LEPDMELSEQ (66 aa). Topologically, residues 1–72 are cytoplasmic; that stretch reads MQKYHFTGLD…LSEQVQSEAK (72 aa). 2 residues coordinate Cd(2+): Cys-11 and Cys-14. Co(2+) contacts are provided by Cys-11 and Cys-14. Zn(2+) is bound by residues Cys-11 and Cys-14. The chain crosses the membrane as a helical span at residues 73–92; that stretch reads PSAIPLLLSVVLYLIAVATI. The Extracellular segment spans residues 93–102; it reads HFSAQNWALH. A helical transmembrane segment spans residues 103–124; it reads LSYALLAGVYLVAGKDVFLGAL. Residues 125–131 lie on the Cytoplasmic side of the membrane; it reads RAIRNKQ. Residues 132 to 151 traverse the membrane as a helical segment; sequence FFDENTLMLSATIAAFGVGA. The Extracellular portion of the chain corresponds to 152 to 154; it reads HEE. Residues 155 to 174 traverse the membrane as a helical segment; the sequence is AVSIMVFYSAGEFLQQLAIA. Topologically, residues 175 to 308 are cytoplasmic; that stretch reads RSKQSLHALL…ITTFARYYTP (134 aa). A helical transmembrane segment spans residues 309–327; sequence AVFAIALLIALVPPLLGHG. Residues 328–332 lie on the Extracellular side of the membrane; sequence DFDTW. The chain crosses the membrane as a helical span at residues 333-350; sequence IYRGLFALMVSCPCALVI. The Cytoplasmic portion of the chain corresponds to 351–630; the sequence is SVPLGYFGGV…VFKIAKKTKR (280 aa). Asp-388 acts as the 4-aspartylphosphate intermediate in catalysis. The Mg(2+) site is built by Asp-578 and Asp-582. The helical transmembrane segment at 631 to 652 threads the bilayer; it reads IIIENIIFALAIKAMFIVLGLS. The Extracellular segment spans residues 653-660; it reads GDASLWEA. A helical transmembrane segment spans residues 661–676; the sequence is VLGDVGVTLIALANSM. At 677-681 the chain is on the cytoplasmic side; sequence RTMRI.

The protein belongs to the cation transport ATPase (P-type) (TC 3.A.3) family. Type IB subfamily.

It localises to the cell membrane. The catalysed reaction is Zn(2+)(in) + ATP + H2O = Zn(2+)(out) + ADP + phosphate + H(+). It carries out the reaction Cd(2+)(in) + ATP + H2O = Cd(2+)(out) + ADP + phosphate + H(+). In terms of biological role, couples the hydrolysis of ATP with the transport of cadmium, zinc and cobalt out of the cell. This chain is Cadmium, zinc and cobalt-transporting ATPase (cadA), found in Helicobacter felis.